Here is a 452-residue protein sequence, read N- to C-terminus: 23S rRNA (uracil(1939)-C(5))-methyltransferase RlmD (452 aa).

The TRAM domain occupies 1 to 57; the sequence is METEVNVAEISALDYEGRGVTKVGGKTVFIKGALPSERVGFRIVRQKKQFDEAEAVA. Residues Cys70, Cys76, Cys79, and Cys157 each coordinate [4Fe-4S] cluster. The S-adenosyl-L-methionine site is built by Gln269, Phe298, Asn303, Glu319, Asn347, and Asp368. Residue Cys395 is the Nucleophile of the active site.

The protein belongs to the class I-like SAM-binding methyltransferase superfamily. RNA M5U methyltransferase family. RlmD subfamily.

The enzyme catalyses uridine(1939) in 23S rRNA + S-adenosyl-L-methionine = 5-methyluridine(1939) in 23S rRNA + S-adenosyl-L-homocysteine + H(+). Catalyzes the formation of 5-methyl-uridine at position 1939 (m5U1939) in 23S rRNA. The chain is 23S rRNA (uracil(1939)-C(5))-methyltransferase RlmD from Neisseria lactamica (strain 020-06).